The primary structure comprises 388 residues: Succinate--CoA ligase [ADP-forming] subunit beta (388 aa).

The ATP-grasp domain occupies 9–245; that stretch reads KALLKKYGVS…KSQENERELK (237 aa). ATP is bound by residues K46, 53-55, E100, Y103, and E108; that span reads GRG. Residues N200 and D214 each coordinate Mg(2+). Substrate is bound by residues N265 and 322–324; that span reads GIV.

The protein belongs to the succinate/malate CoA ligase beta subunit family. As to quaternary structure, heterotetramer of two alpha and two beta subunits. It depends on Mg(2+) as a cofactor.

It catalyses the reaction succinate + ATP + CoA = succinyl-CoA + ADP + phosphate. The enzyme catalyses GTP + succinate + CoA = succinyl-CoA + GDP + phosphate. It functions in the pathway carbohydrate metabolism; tricarboxylic acid cycle; succinate from succinyl-CoA (ligase route): step 1/1. Succinyl-CoA synthetase functions in the citric acid cycle (TCA), coupling the hydrolysis of succinyl-CoA to the synthesis of either ATP or GTP and thus represents the only step of substrate-level phosphorylation in the TCA. The beta subunit provides nucleotide specificity of the enzyme and binds the substrate succinate, while the binding sites for coenzyme A and phosphate are found in the alpha subunit. The protein is Succinate--CoA ligase [ADP-forming] subunit beta of Acinetobacter baylyi (strain ATCC 33305 / BD413 / ADP1).